Here is a 340-residue protein sequence, read N- to C-terminus: Holliday junction branch migration complex subunit RuvB (340 aa).

A large ATPase domain (RuvB-L) region spans residues 1-182 (MSDIDPTVRA…FGIPTRLQFY (182 aa)). Residues Leu-21, Arg-22, Gly-63, Lys-66, Thr-67, Thr-68, 129–131 (EDF), Arg-172, Tyr-182, and Arg-219 contribute to the ATP site. Thr-67 contributes to the Mg(2+) binding site. The small ATPAse domain (RuvB-S) stretch occupies residues 183-253 (TEDELFIIVD…LADMALNRLG (71 aa)). Positions 256–340 (HLGLDGADRR…PRAQTDLFEG (85 aa)) are head domain (RuvB-H). Arg-292, Arg-311, and Arg-316 together coordinate DNA.

This sequence belongs to the RuvB family. As to quaternary structure, homohexamer. Forms an RuvA(8)-RuvB(12)-Holliday junction (HJ) complex. HJ DNA is sandwiched between 2 RuvA tetramers; dsDNA enters through RuvA and exits via RuvB. An RuvB hexamer assembles on each DNA strand where it exits the tetramer. Each RuvB hexamer is contacted by two RuvA subunits (via domain III) on 2 adjacent RuvB subunits; this complex drives branch migration. In the full resolvosome a probable DNA-RuvA(4)-RuvB(12)-RuvC(2) complex forms which resolves the HJ.

The protein resides in the cytoplasm. The catalysed reaction is ATP + H2O = ADP + phosphate + H(+). In terms of biological role, the RuvA-RuvB-RuvC complex processes Holliday junction (HJ) DNA during genetic recombination and DNA repair, while the RuvA-RuvB complex plays an important role in the rescue of blocked DNA replication forks via replication fork reversal (RFR). RuvA specifically binds to HJ cruciform DNA, conferring on it an open structure. The RuvB hexamer acts as an ATP-dependent pump, pulling dsDNA into and through the RuvAB complex. RuvB forms 2 homohexamers on either side of HJ DNA bound by 1 or 2 RuvA tetramers; 4 subunits per hexamer contact DNA at a time. Coordinated motions by a converter formed by DNA-disengaged RuvB subunits stimulates ATP hydrolysis and nucleotide exchange. Immobilization of the converter enables RuvB to convert the ATP-contained energy into a lever motion, pulling 2 nucleotides of DNA out of the RuvA tetramer per ATP hydrolyzed, thus driving DNA branch migration. The RuvB motors rotate together with the DNA substrate, which together with the progressing nucleotide cycle form the mechanistic basis for DNA recombination by continuous HJ branch migration. Branch migration allows RuvC to scan DNA until it finds its consensus sequence, where it cleaves and resolves cruciform DNA. The protein is Holliday junction branch migration complex subunit RuvB of Roseobacter denitrificans (strain ATCC 33942 / OCh 114) (Erythrobacter sp. (strain OCh 114)).